The chain runs to 385 residues: Ethanolamine kinase 2 (385 aa).

It belongs to the choline/ethanolamine kinase family. Expressed in testis and liver. Low expression in ovary and kidney.

It catalyses the reaction ethanolamine + ATP = phosphoethanolamine + ADP + H(+). Its pathway is phospholipid metabolism; phosphatidylethanolamine biosynthesis; phosphatidylethanolamine from ethanolamine: step 1/3. Highly specific for ethanolamine phosphorylation. Does not have choline kinase activity. The sequence is that of Ethanolamine kinase 2 (Etnk2) from Mus musculus (Mouse).